A 383-amino-acid polypeptide reads, in one-letter code: UDP-N-acetylglucosamine 2-epimerase (383 aa).

This sequence belongs to the UDP-N-acetylglucosamine 2-epimerase family.

It carries out the reaction UDP-N-acetyl-alpha-D-glucosamine = UDP-N-acetyl-alpha-D-mannosamine. It participates in capsule biogenesis; capsule polysaccharide biosynthesis. Non-hydrolyzing C2-epimerase involved in the biosynthesis of capsular polysaccharides. Catalyzes the C2 epimerization of UDP-N-acetylglucosamine (UDP-GlcNAc) to form UDP-N-acetylmannosamine (UDP-ManNAc). This chain is UDP-N-acetylglucosamine 2-epimerase, found in Campylobacter jejuni.